Reading from the N-terminus, the 260-residue chain is uncharacterized protein (260 aa).

Belongs to the methyltransferase superfamily.

Its subcellular location is the cytoplasm. It localises to the nucleus. Its function is as follows. Probable methyltransferase. This is an uncharacterized protein from Schizosaccharomyces pombe (strain 972 / ATCC 24843) (Fission yeast).